The sequence spans 652 residues: DNA ligase (652 aa).

Residues Asp29 to Asp33, Ser78 to Leu79, and Glu107 each bind NAD(+). Catalysis depends on Lys109, which acts as the N6-AMP-lysine intermediate. Residues Arg130, Glu164, Lys278, and Lys302 each contribute to the NAD(+) site. Residues Cys395, Cys398, Cys413, and Cys418 each contribute to the Zn(2+) site. Positions Asn577–Leu652 constitute a BRCT domain.

It belongs to the NAD-dependent DNA ligase family. LigA subfamily. Mg(2+) is required as a cofactor. Requires Mn(2+) as cofactor.

It catalyses the reaction NAD(+) + (deoxyribonucleotide)n-3'-hydroxyl + 5'-phospho-(deoxyribonucleotide)m = (deoxyribonucleotide)n+m + AMP + beta-nicotinamide D-nucleotide.. Functionally, DNA ligase that catalyzes the formation of phosphodiester linkages between 5'-phosphoryl and 3'-hydroxyl groups in double-stranded DNA using NAD as a coenzyme and as the energy source for the reaction. It is essential for DNA replication and repair of damaged DNA. The protein is DNA ligase of Streptococcus pyogenes serotype M49 (strain NZ131).